The chain runs to 1036 residues: Isoleucine--tRNA ligase (1036 aa).

Residues 46–56 (PFATGLPHYGH) carry the 'HIGH' region motif. A 'KMSKS' region motif is present at residues 589 to 593 (KMSKR). Residue Lys-592 participates in ATP binding.

This sequence belongs to the class-I aminoacyl-tRNA synthetase family. IleS type 2 subfamily. In terms of assembly, monomer. It depends on Zn(2+) as a cofactor.

The protein resides in the cytoplasm. It carries out the reaction tRNA(Ile) + L-isoleucine + ATP = L-isoleucyl-tRNA(Ile) + AMP + diphosphate. Its function is as follows. Catalyzes the attachment of isoleucine to tRNA(Ile). As IleRS can inadvertently accommodate and process structurally similar amino acids such as valine, to avoid such errors it has two additional distinct tRNA(Ile)-dependent editing activities. One activity is designated as 'pretransfer' editing and involves the hydrolysis of activated Val-AMP. The other activity is designated 'posttransfer' editing and involves deacylation of mischarged Val-tRNA(Ile). This Chlamydia trachomatis serovar L2b (strain UCH-1/proctitis) protein is Isoleucine--tRNA ligase.